A 147-amino-acid polypeptide reads, in one-letter code: Ubiquitin-conjugating enzyme E2 D1 (147 aa).

A UBC core domain is found at 1-147; the sequence is MALKRIQKEL…AREWTQKYAM (147 aa). Cys85 functions as the Glycyl thioester intermediate in the catalytic mechanism.

The protein belongs to the ubiquitin-conjugating enzyme family. In terms of assembly, component of a E3 ubiquitin ligase complex containing UBE2D1, SIAH1, CACYBP/SIP, SKP1, APC and TBL1X. Interacts with RNF11. Post-translationally, autoubiquitinated.

It localises to the cytoplasm. The catalysed reaction is S-ubiquitinyl-[E1 ubiquitin-activating enzyme]-L-cysteine + [E2 ubiquitin-conjugating enzyme]-L-cysteine = [E1 ubiquitin-activating enzyme]-L-cysteine + S-ubiquitinyl-[E2 ubiquitin-conjugating enzyme]-L-cysteine.. The enzyme catalyses S-ubiquitinyl-[E1 ubiquitin-activating enzyme]-L-cysteine + [acceptor protein]-L-lysine = [E1 ubiquitin-activating enzyme]-L-cysteine + N(6)-monoubiquitinyl-[acceptor protein]-L-lysine.. The protein operates within protein modification; protein ubiquitination. Functionally, accepts ubiquitin from the E1 complex and catalyzes its covalent attachment to other proteins. In vitro catalyzes 'Lys-48'-linked polyubiquitination. Mediates the selective degradation of short-lived and abnormal proteins. Functions in the E6/E6-AP-induced ubiquitination of p53/TP53. Mediates ubiquitination of PEX5 and auto-ubiquitination of STUB1, TRAF6 and TRIM63/MURF1. Ubiquitinates STUB1-associated HSP90AB1 in vitro. Lacks inherent specificity for any particular lysine residue of ubiquitin. Essential for viral activation of IRF3. Mediates polyubiquitination of CYP3A4. In Bos taurus (Bovine), this protein is Ubiquitin-conjugating enzyme E2 D1 (UBE2D1).